The sequence spans 493 residues: MKISSLLFEISELVEKNVGYITQIIGPVLDVAFSPGEMPSIYNSLVVKGRNSAGQEINVTCEVQQLLGNNEVRAVAMSATDGLMRGMGAVDTGAPLSVPVGETTLGRIFNVLGEPVDNLGPVQNSATFPIHRSAPAFTQLDTKLSIFETGIKVVDLLAPYRRGGKIGLFGGAGVGKTVLIMELINNIAKAHGGVSVFGGVGERTREGNDLYMEMKESKVINEQNISESKVALVYGQMNEPPGARMRVGLTALTMAEYFRDINKRDVLLFIDNIFRFVQAGSEVSALLGRMPSAVGYQPTLGTEMGSLQERITSTKEGSITSIQAVYVPADDLTDPAPATTFAHLDATTVLSRGLAAKGIYPAVDPLDSTSTMLQPWIVGEEHYETAQGVKQTLQRYKELQDIIAILGLDELSEEDRLTVARARKIERFLSQPFFVAEVFTGSPGKYVSLPETIKGFQMILSGELDNLPEQAFYLVGNIDEAAAKAAALQAGGQ.

Residue 170–177 participates in ATP binding; that stretch reads GGAGVGKT.

This sequence belongs to the ATPase alpha/beta chains family. As to quaternary structure, F-type ATPases have 2 components, CF(1) - the catalytic core - and CF(0) - the membrane proton channel. CF(1) has five subunits: alpha(3), beta(3), gamma(1), delta(1), epsilon(1). CF(0) has four main subunits: a(1), b(1), b'(1) and c(9-12).

It localises to the plastid. It is found in the chloroplast thylakoid membrane. The catalysed reaction is ATP + H2O + 4 H(+)(in) = ADP + phosphate + 5 H(+)(out). Functionally, produces ATP from ADP in the presence of a proton gradient across the membrane. The catalytic sites are hosted primarily by the beta subunits. This chain is ATP synthase subunit beta, chloroplastic, found in Adiantum capillus-veneris (Maidenhair fern).